Consider the following 570-residue polypeptide: AT-rich interactive domain-containing protein 3A (570 aa).

Residues 102-215 are disordered; sequence AGVPNSSSGH…LAPQAQSQHH (114 aa). Residues 120 to 160 show a composition bias toward acidic residues; it reads DIDDEDDEDDDPELDRGMDDEERDMDEDDSMNEGGGDEDLE. S179 is modified (phosphoserine). Residues 232–324 enclose the ARID domain; sequence DEKRKEFLDD…YLYPYECEKR (93 aa). S356 carries the post-translational modification Phosphoserine. One can recognise an REKLES domain in the interval 429–523; it reads AALEQLREKL…GVLFARKPAI (95 aa). The tract at residues 430 to 473 is important for nuclear localization; it reads ALEQLREKLESGEPPEKKVMLMAEEQQRIMQHALQQNLFAMATQ. The homodimerization stretch occupies residues 475–495; that stretch reads PMNIKLNNRDDRQETALNLST. The tract at residues 519–531 is important for cytoplasmic localization; sequence RKPAIGFMPSSQR. The disordered stretch occupies residues 528-570; it reads SSQRVHHQHSSQGKSNSPGLSSHIQPSSSASSSASSHGPATSP. Phosphoserine occurs at positions 542 and 569. A compositionally biased stretch (low complexity) spans 548–570; it reads SSHIQPSSSASSSASSHGPATSP.

As to quaternary structure, homodimer.

The protein resides in the nucleus. The protein localises to the cytoplasm. Functionally, transcription factor. The sequence is that of AT-rich interactive domain-containing protein 3A (arid3a) from Danio rerio (Zebrafish).